The sequence spans 399 residues: Bombesin receptor subtype-3 (399 aa).

The Extracellular portion of the chain corresponds to 1-41 (MSQRQPQSPNQTLISITNDTETSSSAVSNDTTPKGWTGDNS). N10, N18, and N29 each carry an N-linked (GlcNAc...) asparagine glycan. A helical transmembrane segment spans residues 42 to 63 (PGIEALCAIYITYAVIISVGIL). The Cytoplasmic segment spans residues 64-82 (GNAILIKVFFKTKSMQTVP). The helical transmembrane segment at 83-103 (NIFITSLAFGDLLLLLTCVPV) threads the bilayer. The Extracellular segment spans residues 104-121 (DATHYLAEGWLFGKVGCK). An intrachain disulfide couples C120 to C203. The chain crosses the membrane as a helical span at residues 122-143 (VLSFIRLTSVGVSVFTLTILSA). Over 144-163 (DRYKAVVKPLERQPSNAILK) the chain is Cytoplasmic. A helical membrane pass occupies residues 164–184 (TCAKAGGIWIMAMIFALPEAI). The Extracellular portion of the chain corresponds to 185-220 (FSNVYTFQDPNRNVTFESCNSYPISERLLQEIHSLL). The helical transmembrane segment at 221–241 (CFLVFYIIPLSIISVYYSLIA) threads the bilayer. Residues 242-272 (RTLYKSTLNIPTEEQSHARKQIESRKRIAKT) are Cytoplasmic-facing. Residues 273 to 293 (VLVLVALFALCWLPNHLLYLY) traverse the membrane as a helical segment. At 294-313 (HSFTYESYAEPSDVPFVVTI) the chain is on the extracellular side. The helical transmembrane segment at 314 to 333 (FSRVLAFSNSCVNPFALYWL) threads the bilayer. Over 334 to 399 (SKTFQKHFKA…STAKKGEDKV (66 aa)) the chain is Cytoplasmic. A lipid anchor (S-palmitoyl cysteine) is attached at C347.

The protein belongs to the G-protein coupled receptor 1 family. In terms of assembly, interacts with C6orf89.

The protein resides in the cell membrane. In terms of biological role, role in sperm cell division, maturation, or function. This receptor mediates its action by association with G proteins that activate a phosphatidylinositol-calcium second messenger system. The polypeptide is Bombesin receptor subtype-3 (Brs3) (Rattus norvegicus (Rat)).